The sequence spans 410 residues: ORC1-type DNA replication protein 4 (410 aa).

Residues 73-77 (TGKSL), Y220, and R232 contribute to the ATP site.

The protein belongs to the CDC6/cdc18 family.

Functionally, involved in regulation of DNA replication. The protein is ORC1-type DNA replication protein 4 (orc4) of Halobacterium salinarum (strain ATCC 700922 / JCM 11081 / NRC-1) (Halobacterium halobium).